The chain runs to 432 residues: 5'-deoxyadenosine deaminase (432 aa).

2 residues coordinate Zn(2+): histidine 63 and histidine 65. Substrate-binding residues include glutamate 92 and histidine 184. Histidine 211 provides a ligand contact to Zn(2+). Substrate is bound by residues glutamate 214 and aspartate 299. Aspartate 299 is a Zn(2+) binding site.

It belongs to the metallo-dependent hydrolases superfamily. MTA/SAH deaminase family. Homotetramer. Zn(2+) is required as a cofactor.

It carries out the reaction 5'-deoxyadenosine + H2O + H(+) = 5'-deoxyinosine + NH4(+). The catalysed reaction is S-adenosyl-L-homocysteine + H2O + H(+) = S-inosyl-L-homocysteine + NH4(+). It catalyses the reaction S-methyl-5'-thioadenosine + H2O + H(+) = S-methyl-5'-thioinosine + NH4(+). The enzyme catalyses adenosine + H2O + H(+) = inosine + NH4(+). It participates in amino-acid biosynthesis; S-adenosyl-L-methionine biosynthesis. In terms of biological role, catalyzes the deamination of three SAM-derived enzymatic products, namely 5'-deoxyadenosine, S-adenosyl-L-homocysteine, and 5'-methylthioadenosine, to produce the inosine analogs. Can also deaminate adenosine. The preferred substrate for this enzyme is 5'-deoxyadenosine, but all these substrates are efficiently deaminated. Likely functions in a S-adenosyl-L-methionine (SAM) recycling pathway from S-adenosyl-L-homocysteine (SAH) produced from SAM-dependent methylation reactions. May also be involved in the recycling of 5'-deoxyadenosine, whereupon the 5'-deoxyribose moiety of 5'-deoxyinosine is further metabolized to deoxyhexoses used for the biosynthesis of aromatic amino acids in methanogens. This is 5'-deoxyadenosine deaminase from Methanosarcina barkeri (strain Fusaro / DSM 804).